The chain runs to 614 residues: Male-specific lethal 1 homolog (614 aa).

Disordered stretches follow at residues 1–127 (MTMR…GCSP) and 147–217 (KEPT…GASS). S66 and S126 each carry phosphoserine. Residues 158 to 169 (GAASPAATASDP) show a composition bias toward low complexity. A compositionally biased stretch (pro residues) spans 170–184 (AGPPPLPLPGPPPLA). Low complexity predominate over residues 185–194 (PTATAGTLAA). S205 is subject to Phosphoserine. Positions 213–282 (SGASSQAACL…KDNEKERHKL (70 aa)) form a coiled coil. Residues 223–237 (KQILLLQLDLIEQQQ) form an interaction with MSL2 region. 2 stretches are compositionally biased toward basic and acidic residues: residues 272–281 (KKDNEKERHK) and 294–304 (TELSEKIKLEC). The segment at 272–420 (KKDNEKERHK…PKEKAFSSEI (149 aa)) is disordered. Residue K301 forms a Glycyl lysine isopeptide (Lys-Gly) (interchain with G-Cter in SUMO2) linkage. Positions 317–346 (PKPFSCGRSGKGHKRKSPFGSTERKTPVKK) match the Nuclear localization signal motif. Residue K353 is modified to N6-acetyllysine. Glycyl lysine isopeptide (Lys-Gly) (interchain with G-Cter in SUMO2) cross-links involve residues K365 and K378. Over residues 376 to 392 (VCKRELRSQETPEKPRS) the composition is skewed to basic and acidic residues. S393 is subject to Phosphoserine. Residues 393-407 (SVDTPPRLSTPQKGP) show a composition bias toward polar residues. At T396 the chain carries Phosphothreonine. S442 carries the phosphoserine modification. Residues 472-591 (VLAVPSWRDH…LTPQNFELPW (120 aa)) enclose the PEHE domain. The interaction with KAT8 HAT domain stretch occupies residues 496–514 (ENLDDSVFSKRHAKLELDE). The Bipartite nuclear localization signal signature appears at 505–519 (KRHAKLELDEKRRKR). The interval 550–591 (EVTSFFPEPDDVESLMITPFLPVVAFGRPLPKLTPQNFELPW) is sufficient for interaction with MSL3 MRG domain.

This sequence belongs to the msl-1 family. In terms of assembly, component of a multisubunit histone acetyltransferase complex (MSL) at least composed of the KAT8/MOF/MYST1, MSL1/hampin, MSL2 and MSL3. Forms a MSL heterotetrameric core with MSL2. Interacts (via PEHE domain) with KAT8 (via HAT domain) and MSL3 (via MRG domain); both interactions are direct. Directly interacts with NUPR1. Interacts with TP53BP1; this interaction may be required for MSL1 DNA repair activity, but not for histone acetyltransferase activity. Interacts with TTC4, ECM2 and PIHD1. Post-translationally, sumoylated with SUMO1.

Its subcellular location is the nucleus. The protein resides in the nucleoplasm. It is found in the nucleus speckle. Functionally, non-catalytic component of the MSL histone acetyltransferase complex, a multiprotein complex that mediates the majority of histone H4 acetylation at 'Lys-16' (H4K16ac), an epigenetic mark that prevents chromatin compaction. The MSL complex is required for chromosome stability and genome integrity by maintaining homeostatic levels of H4K16ac. The MSL complex is also involved in gene dosage by promoting up-regulation of genes expressed by the X chromosome. X up-regulation is required to compensate for autosomal biallelic expression. The MSL complex also participates in gene dosage compensation by promoting expression of Tsix non-coding RNA. Within the MSL complex, acts as a scaffold to tether MSL3 and KAT8 together for enzymatic activity regulation. Greatly enhances MSL2 E3 ubiquitin ligase activity, promoting monoubiquitination of histone H2B at 'Lys-34' (H2BK34Ub). This modification in turn stimulates histone H3 methylation at 'Lys-4' (H3K4me) and 'Lys-79' (H3K79me) and leads to gene activation, including that of HOXA9 and MEIS1. The sequence is that of Male-specific lethal 1 homolog from Homo sapiens (Human).